Consider the following 368-residue polypeptide: MIIKKNKKIIVAMSGGVDSSVCAWILKKQNYQVEGLFMKNWEEDDQEGYCSSTKDLLDAENICKKLNIYLHKMNFSSEYWEYVFENFLKEYKKGNTPNPDILCNKEIKFNMFLNYSIQELKADYIATGHYARIKKINGKYLLLKGIDTNKDQSYFLYTLNSIQLRKILFPIGHLKKNKVRNIAKKIDLKIAKKKDSTGICFIGPKKLKNFLSLYISEKKGDIVTISGRVIGKHSGVFYYTIGQRQGLGIGGIKGEYNIPWYVVEKNIEKNILIVAQGSYNKHLMSIGLIAKNINWINYDQLSFPLSCMAKTRYRQKDIICKIEYINNHHIKILFDCPVAAVTPGQSVVFYVSDICIGGGIIESRLPLL.

Residues 12-19 and M38 contribute to the ATP site; that span reads AMSGGVDS. The interval 98-100 is interaction with target base in tRNA; sequence NPD. The Nucleophile role is filled by C103. Residues C103 and C200 are joined by a disulfide bond. G128 is an ATP binding site. Positions 150 to 152 are interaction with tRNA; it reads KDQ. The active-site Cysteine persulfide intermediate is C200. Residues 312–313 form an interaction with tRNA region; it reads RY.

It belongs to the MnmA/TRMU family. Interacts with TusE.

It localises to the cytoplasm. The catalysed reaction is S-sulfanyl-L-cysteinyl-[protein] + uridine(34) in tRNA + AH2 + ATP = 2-thiouridine(34) in tRNA + L-cysteinyl-[protein] + A + AMP + diphosphate + H(+). Catalyzes the 2-thiolation of uridine at the wobble position (U34) of tRNA(Lys), tRNA(Glu) and tRNA(Gln), leading to the formation of s(2)U34, the first step of tRNA-mnm(5)s(2)U34 synthesis. Sulfur is provided by IscS, via a sulfur-relay system. Binds ATP and its substrate tRNAs. In Buchnera aphidicola subsp. Acyrthosiphon pisum (strain APS) (Acyrthosiphon pisum symbiotic bacterium), this protein is tRNA-specific 2-thiouridylase MnmA.